The following is a 159-amino-acid chain: U1 small nuclear ribonucleoprotein C (159 aa).

The Matrin-type zinc-finger motif lies at 4 to 36; the sequence is FYCDYCDTYLTHDSPSVRKTHCSGRKHKENVKD. Tyrosine 8 bears the Phosphotyrosine mark. Serine 17 carries the post-translational modification Phosphoserine. An N6-acetyllysine modification is found at lysine 52. Residues 62–96 are disordered; that stretch reads IPPAPFSAPPPAGAMIPPPPSLPGPPRPGMMPAPH. Residues 63–92 show a composition bias toward pro residues; that stretch reads PPAPFSAPPPAGAMIPPPPSLPGPPRPGMM.

This sequence belongs to the U1 small nuclear ribonucleoprotein C family. In terms of assembly, component of the U1 snRNP. The U1 snRNP is composed of the U1 snRNA and the 7 core Sm proteins SNRPB, SNRPD1, SNRPD2, SNRPD3, SNRPE, SNRPF and SNRPG that assemble in a heptameric protein ring on the Sm site of the small nuclear RNA to form the core snRNP, and at least 3 U1 snRNP-specific proteins SNRNP70/U1-70K, SNRPA/U1-A and SNRPC/U1-C. SNRPC/U1-C interacts with U1 snRNA and the 5' splice-site region of the pre-mRNA. Interacts (via N-terminus) with TIA1 (via C-terminus); thereby promoting spliceosomal U1 snRNP recruitment to 5' splice sites.

It is found in the nucleus. Its function is as follows. Component of the spliceosomal U1 snRNP, which is essential for recognition of the pre-mRNA 5' splice-site and the subsequent assembly of the spliceosome. SNRPC/U1-C is directly involved in initial 5' splice-site recognition for both constitutive and regulated alternative splicing. The interaction with the 5' splice-site seems to precede base-pairing between the pre-mRNA and the U1 snRNA. Stimulates commitment or early (E) complex formation by stabilizing the base pairing of the 5' end of the U1 snRNA and the 5' splice-site region. The protein is U1 small nuclear ribonucleoprotein C of Rattus norvegicus (Rat).